A 380-amino-acid chain; its full sequence is UPF0754 membrane protein Bsph_0374 (380 aa).

The next 2 membrane-spanning stretches (helical) occupy residues 1–21 (MDNF…IGGV) and 357–377 (MITV…GLIV).

Belongs to the UPF0754 family.

Its subcellular location is the cell membrane. In Lysinibacillus sphaericus (strain C3-41), this protein is UPF0754 membrane protein Bsph_0374.